Here is a 236-residue protein sequence, read N- to C-terminus: uncharacterized protein (236 aa).

Residues glutamine 4–tyrosine 236 form the GP-PDE domain.

This sequence to glycerophosphoryl diester phosphodiesterases (EC 3.1.4.46). It to M.genitalium MG293.

This is an uncharacterized protein from Mycoplasma genitalium (strain ATCC 33530 / DSM 19775 / NCTC 10195 / G37) (Mycoplasmoides genitalium).